The primary structure comprises 378 residues: uncharacterized protein (378 aa).

This sequence belongs to the IIV-6 329R family.

This is an uncharacterized protein from Acheta domesticus (House cricket).